We begin with the raw amino-acid sequence, 278 residues long: Small ribosomal subunit protein uS3 (278 aa).

The KH type-2 domain occupies 39–107 (LRKAISKKYV…KVQLNIVEIS (69 aa)). A disordered region spans residues 255-278 (AEIPAEEKPKRVVKKAENITKEEE).

Belongs to the universal ribosomal protein uS3 family. In terms of assembly, part of the 30S ribosomal subunit. Forms a tight complex with proteins S10 and S14.

Functionally, binds the lower part of the 30S subunit head. Binds mRNA in the 70S ribosome, positioning it for translation. In Dehalococcoides mccartyi (strain ATCC BAA-2100 / JCM 16839 / KCTC 5957 / BAV1), this protein is Small ribosomal subunit protein uS3.